The chain runs to 367 residues: AA9 family lytic polysaccharide monooxygenase A (367 aa).

An N-terminal signal peptide occupies residues 1–20; it reads MKSSTFGMLALAAAAKLVSA. H21 is a binding site for Cu(2+). The interval 37–56 is disordered; that stretch reads GNSESGYIRSPPSNSPITDV. A disulfide bridge connects residues C63 and C183. Residue H102 participates in Cu(2+) binding. Residue H169 coordinates O2. Y180 contacts Cu(2+). The interval 234 to 287 is disordered; the sequence is GASGSSSSPSASASASAPAATSAAPAPSSFTTIAKQPATSSTEAPSTENTSTTS. Low complexity-rich tracts occupy residues 235–262 and 270–287; these read ASGS…APSS and PATS…STTS. Residue N282 is glycosylated (N-linked (GlcNAc...) asparagine). Positions 329–365 constitute a CBM1 domain; it reads GAVKEWYQCGGLNYKGSTQCEEGLTCKKWNPYYYQCI.

The protein belongs to the polysaccharide monooxygenase AA9 family. Cu(2+) serves as cofactor.

Its subcellular location is the secreted. The catalysed reaction is [(1-&gt;4)-beta-D-glucosyl]n+m + reduced acceptor + O2 = 4-dehydro-beta-D-glucosyl-[(1-&gt;4)-beta-D-glucosyl]n-1 + [(1-&gt;4)-beta-D-glucosyl]m + acceptor + H2O.. In terms of biological role, lytic polysaccharide monooxygenase (LPMO) that depolymerizes crystalline and amorphous polysaccharides via the oxidation of scissile alpha- or beta-(1-4)-glycosidic bonds, yielding C4 oxidation products. Catalysis by LPMOs requires the reduction of the active-site copper from Cu(II) to Cu(I) by a reducing agent and H(2)O(2) or O(2) as a cosubstrate. Active on cellulose and cello-oligosaccharides, as well as plant cell wall-derived hemicellulosic polysaccharides. Also active on cello-oligosaccharides such as cellohexaose, cellopentaose or cellotetraose. The protein is AA9 family lytic polysaccharide monooxygenase A of Aspergillus oryzae (strain ATCC 42149 / RIB 40) (Yellow koji mold).